We begin with the raw amino-acid sequence, 83 residues long: Putative beta-neurotoxin RjAa12f (83 aa).

Positions 1–18 are cleaved as a signal peptide; sequence MKILIFIIASFMLIGVEC. Residues 19-82 enclose the LCN-type CS-alpha/beta domain; sequence KEGYPMGRDG…VWDSSTNKCG (64 aa). Intrachain disulfides connect C29/C81, C33/C55, C40/C62, and C44/C64. Residue G83 is a propeptide.

Post-translationally, contains 4 disulfide bonds. In terms of tissue distribution, expressed by the venom gland.

The protein localises to the secreted. Its function is as follows. Beta toxins bind voltage-independently at site-4 of sodium channels (Nav) and shift the voltage of activation toward more negative potentials thereby affecting sodium channel activation and promoting spontaneous and repetitive firing. This toxin is lethal to insects (A.domestica). It is not toxic to mice and does not affect mammal F11 sodium channels. The sequence is that of Putative beta-neurotoxin RjAa12f from Rhopalurus junceus (Caribbean blue scorpion).